Consider the following 537-residue polypeptide: MDKLYLQLNLCTDIIEKGATCHTAKIAWLNEFCAAFHTFASKFKSYLIELAPKNELEGNIRIHVETIYLCFTQVITCITQLERTINIEGTLAAGAQLLATRTHFLDRIDWCLRRLQASVYQLAEEAIASTPVKLEDLSFVELLDLALDKLETYSEIVPAQSQAEQEDSDEIDQLVDHVNHLIKHALAFANVALESDKKALSAIYETVLEESGIFEKNFKTHNPNRRKLEALSLQPALYSLETYLNEALFDLIFTSMFDTEKASIKRLRNVLQSCESSGAVDGLLSDFDINVDRIQQIGIFAIAFTQDVKTKTIIRSCLASLESLDACIVPAFQLQTTSLASYHADILEHHFRQELMVFRNVIHEIIDSRALINNYLDILAESIDNAEKLYPKGYLLQVAQMGNVIYQHFQLRANNQELIADEEGKRLHQDFVAILHECQAVLEISVHVDLKRIIKRLKILYSILAKLRDVCDKLVYERAMSNNEKSMTTSTKLRQHSFANPEIGHTIANCNRTDSSDSLSHESDLISFQLTEILRIT.

It localises to the cytoplasm. It is found in the cell membrane. Its function is as follows. Required for the cellularization of the syncytial blastoderm embryo. Involved in the localization of the actin filaments just prior to and during plasma membrane invagination. Sry-alpha together with nullo and bnk may provide auxiliary functions, by acting both to stabilize a large and dynamic microfilament structure and regulate its functions. This Drosophila virilis (Fruit fly) protein is Serendipity locus protein alpha (Sry-alpha).